Reading from the N-terminus, the 376-residue chain is Multicilin (376 aa).

A coiled-coil region spans residues 165–213 (EQYWRDVADHNQKALGDALVENNQLQVSLTEKQEEIASLKEKNIQLNEL). The tract at residues 230–261 (ERPKHSSGATQGRLPVKRSLEDFYPQSNEPDS) is disordered. The segment at 331 to 376 (TELEEDVSFRTSIKEHSTIRTLAFPQGNAFTIRTAAGGYKFRWVPN) is TIRT domain.

It belongs to the geminin family. In terms of assembly, component of the EDM complex, at least composed of e2f4, e2f5, mcidas and tfdp1.

The protein resides in the nucleus. Transcription regulator specifically required for multiciliate cell differentiation. Acts in a multiprotein complex containing e2f4 and e2f5 that binds and activate genes required for centriole biogenesis. Activates genes required for centriole assembly (plk4, cep152) and genes specifically required for motile cilia formation (foxj1). Also promotes the deuterosome pathway of centriole biogenesis by activating expression of deup1, but not its paralog cep63. The sequence is that of Multicilin (mcidas) from Xenopus tropicalis (Western clawed frog).